The chain runs to 265 residues: Hydroxyethylthiazole kinase 2 (265 aa).

M39 is a binding site for substrate. K115 and T168 together coordinate ATP. G195 lines the substrate pocket.

The protein belongs to the Thz kinase family. Mg(2+) is required as a cofactor.

It catalyses the reaction 5-(2-hydroxyethyl)-4-methylthiazole + ATP = 4-methyl-5-(2-phosphooxyethyl)-thiazole + ADP + H(+). It participates in cofactor biosynthesis; thiamine diphosphate biosynthesis; 4-methyl-5-(2-phosphoethyl)-thiazole from 5-(2-hydroxyethyl)-4-methylthiazole: step 1/1. In terms of biological role, catalyzes the phosphorylation of the hydroxyl group of 4-methyl-5-beta-hydroxyethylthiazole (THZ). This chain is Hydroxyethylthiazole kinase 2, found in Clostridium botulinum (strain 657 / Type Ba4).